A 374-amino-acid polypeptide reads, in one-letter code: GDSL esterase/lipase At3g50400 (374 aa).

The N-terminal stretch at Met1 to Ala26 is a signal peptide. The active-site Nucleophile is the Ser41. Residues Asn104 and Asn125 are each glycosylated (N-linked (GlcNAc...) asparagine). Residues Asp339 and His342 contribute to the active site.

Belongs to the 'GDSL' lipolytic enzyme family.

The protein localises to the secreted. The sequence is that of GDSL esterase/lipase At3g50400 from Arabidopsis thaliana (Mouse-ear cress).